The chain runs to 151 residues: Ribonuclease P protein component (151 aa).

The disordered stretch occupies residues 1–62; it reads MDEKDLATQP…LKGDSAFRRL (62 aa). A compositionally biased stretch (low complexity) spans 28–48; that stretch reads GAQGAEAQAAEGPLAAHAQGA.

The protein belongs to the RnpA family. In terms of assembly, consists of a catalytic RNA component (M1 or rnpB) and a protein subunit.

It catalyses the reaction Endonucleolytic cleavage of RNA, removing 5'-extranucleotides from tRNA precursor.. In terms of biological role, RNaseP catalyzes the removal of the 5'-leader sequence from pre-tRNA to produce the mature 5'-terminus. It can also cleave other RNA substrates such as 4.5S RNA. The protein component plays an auxiliary but essential role in vivo by binding to the 5'-leader sequence and broadening the substrate specificity of the ribozyme. This Thermus oshimai protein is Ribonuclease P protein component.